The primary structure comprises 110 residues: Nucleoid-associated protein ESA_02800 (110 aa).

A disordered region spans residues 89–110; the sequence is QKEKMASVSSGMQLPPGFKMPF.

Belongs to the YbaB/EbfC family. Homodimer.

Its subcellular location is the cytoplasm. The protein resides in the nucleoid. Its function is as follows. Binds to DNA and alters its conformation. May be involved in regulation of gene expression, nucleoid organization and DNA protection. The protein is Nucleoid-associated protein ESA_02800 of Cronobacter sakazakii (strain ATCC BAA-894) (Enterobacter sakazakii).